Here is a 335-residue protein sequence, read N- to C-terminus: MVREGEERIGNRVLLGVIGVSYRETTLQQREQVLHILQQAQGSFRPEVFQEERDYVLLATCHRVELYSVAPAELFDSLAQEIKLLGVSPYFYRNQDCFAHLFCVAGGLDSLVLGETEIQGQVKRAYLQAAREQKLSFALHFLFQKALKEGKVFRAKGGAPYAAITIPILVDQELRRRQIDKKASLLFIGYSEINRSVAYHLRRQGFSCITFCSRQQLPTLSMRQVVREELCFQDPYRVVFLGSLELQYALPHSLWESIWDIPDRIVFDFAVPRALPSHTVFPHRYMDMDQISDWLREHRKEVNSAHLDSLREVAYRYWNSLNQRLERHDCVGANA.

Substrate-binding positions include 60 to 63, Ser-110, 115 to 117, and Gln-121; these read TCHR and ETE. Cys-61 acts as the Nucleophile in catalysis. 189 to 194 contacts NADP(+); sequence GYSEIN.

The protein belongs to the glutamyl-tRNA reductase family. In terms of assembly, homodimer.

It catalyses the reaction (S)-4-amino-5-oxopentanoate + tRNA(Glu) + NADP(+) = L-glutamyl-tRNA(Glu) + NADPH + H(+). It functions in the pathway porphyrin-containing compound metabolism; protoporphyrin-IX biosynthesis; 5-aminolevulinate from L-glutamyl-tRNA(Glu): step 1/2. Functionally, catalyzes the NADPH-dependent reduction of glutamyl-tRNA(Glu) to glutamate 1-semialdehyde (GSA). The polypeptide is Glutamyl-tRNA reductase (Chlamydia trachomatis serovar L2 (strain ATCC VR-902B / DSM 19102 / 434/Bu)).